We begin with the raw amino-acid sequence, 725 residues long: MVMKASVDDDDSGWELSMPEKMEKSNTNWVDITQDFEEACRELKLGELLHDKLFGLFEAMSAIEMMDPKMDAGMIGNQVNRKVLNFEQAIKDGTIKIKDLTLPELIGIMDTCFCCLITWLEGHSLAQTVFTCLYIHNPDFIEDPAMKAFALGILKICDIAREKVNKAAVFEEEDFQSMTYGFKMANSVTDLRVTGMLKDVEDDMQRRVKSTRSRQGEERDPEVELEHQQCLAVFSRVKFTRVLLTVLIAFTKKETSAVAEAQKLMVQAADLLSAIHNSLHHGIQAQNDTTKGDHPIMMGFEPLVNQRLLPPTFPRYAKIIKREEMVNYFARLIDRIKTVCEVVNLTNLHCILDFFCEFSEQSPCVLSRSLLQTTFLVDNKKVFGTHLMQDMVKDALRSFVSPPVLSPKCYLYNNHQAKDCIDSFVTHCVRPFCSLIQIHGHNRARQRDKLGHILEEFATLQDEAEKVDAALHTMLLKQEPQRQHLACLGTWVLYHNLRIMIQYLLSGFELELYSMHEYYYIYWYLSEFLYAWLMSTLSRADGSQMAEERIMEEQQKGRSSKKTKKKKKVRPLSREITMSQAYQNMCAGMFKTMVAFDMDGKVRKPKFELDSEQVRYEHRFAPFNSVMTPPPVHYLQFKEMSDLNKYSPPPQSPELYVAASKHFQQAKMILENIPNPDHEVNRILKVAKPNFVVMKLLAGGHKKESKVPPEFDFSAHKYFPVVKLV.

Residue Ser-187 is modified to Phosphoserine. Positions 548 to 573 are disordered; that stretch reads ERIMEEQQKGRSSKKTKKKKKVRPLS. Basic residues predominate over residues 558–571; it reads RSSKKTKKKKKVRP.

It belongs to the MAK10 family. Component of the N-terminal acetyltransferase C (NatC) complex, which is composed of NAA35, NAA38 and NAA30.

It localises to the cytoplasm. Functionally, auxillary component of the N-terminal acetyltransferase C (NatC) complex which catalyzes acetylation of N-terminal methionine residues. N-terminal acetylation protects proteins from ubiquitination and degradation by the N-end rule pathway. Involved in regulation of apoptosis and proliferation of smooth muscle cells. The polypeptide is N-alpha-acetyltransferase 35, NatC auxiliary subunit (NAA35) (Homo sapiens (Human)).